The chain runs to 103 residues: Pyrimidine/purine nucleoside phosphorylase (103 aa).

This sequence belongs to the nucleoside phosphorylase PpnP family.

It carries out the reaction a purine D-ribonucleoside + phosphate = a purine nucleobase + alpha-D-ribose 1-phosphate. The catalysed reaction is adenosine + phosphate = alpha-D-ribose 1-phosphate + adenine. It catalyses the reaction cytidine + phosphate = cytosine + alpha-D-ribose 1-phosphate. The enzyme catalyses guanosine + phosphate = alpha-D-ribose 1-phosphate + guanine. It carries out the reaction inosine + phosphate = alpha-D-ribose 1-phosphate + hypoxanthine. The catalysed reaction is thymidine + phosphate = 2-deoxy-alpha-D-ribose 1-phosphate + thymine. It catalyses the reaction uridine + phosphate = alpha-D-ribose 1-phosphate + uracil. The enzyme catalyses xanthosine + phosphate = alpha-D-ribose 1-phosphate + xanthine. Functionally, catalyzes the phosphorolysis of diverse nucleosides, yielding D-ribose 1-phosphate and the respective free bases. Can use uridine, adenosine, guanosine, cytidine, thymidine, inosine and xanthosine as substrates. Also catalyzes the reverse reactions. The sequence is that of Pyrimidine/purine nucleoside phosphorylase from Shewanella baltica (strain OS195).